A 453-amino-acid chain; its full sequence is Secreted aspartic protease 10 (453 aa).

A signal peptide spans 1-20; it reads MDLVIMNFVFLLYLTSVVKC. A Peptidase A1 domain is found at 52 to 372; the sequence is YTTELEIGSN…DLQDMTISVA (321 aa). D70 is a catalytic residue. 70-72 provides a ligand contact to pepstatin A; it reads DTG. C85 and C112 are oxidised to a cystine. N115 and N128 each carry an N-linked (GlcNAc...) asparagine glycan. 138-139 contacts pepstatin A; that stretch reads VD. N-linked (GlcNAc...) asparagine glycans are attached at residues N168, N208, N211, and N245. D266 is a catalytic residue. 266-270 provides a ligand contact to pepstatin A; the sequence is DTGST. N287 carries an N-linked (GlcNAc...) asparagine glycan. C301 and C333 form a disulfide bridge. The disordered stretch occupies residues 387 to 432; the sequence is NPNEDQNEVPTSTSFTQSASSSGSQPSSTISGENMDKNTTSSSSGN. The segment covering 397–417 has biased composition (low complexity); sequence TSTSFTQSASSSGSQPSSTIS. Residues 423–432 show a composition bias toward polar residues; that stretch reads KNTTSSSSGN. N-linked (GlcNAc...) asparagine glycosylation is present at N424. S429 is lipidated: GPI-anchor amidated serine. The propeptide at 430–453 is removed in mature form; sequence SGNCQTRSWIAILSALFLVYIHII.

Belongs to the peptidase A1 family. The GPI-anchor is attached to the protein in the endoplasmic reticulum and serves to target the protein to the cell surface. There, the glucosamine-inositol phospholipid moiety is cleaved off and the GPI-modified mannoprotein is covalently attached via its lipidless GPI glycan remnant to the 1,6-beta-glucan of the outer cell wall layer.

The protein localises to the secreted. Its subcellular location is the cell membrane. It catalyses the reaction Preferential cleavage at the carboxyl of hydrophobic amino acids, but fails to cleave 15-Leu-|-Tyr-16, 16-Tyr-|-Leu-17 and 24-Phe-|-Phe-25 of insulin B chain. Activates trypsinogen, and degrades keratin.. In terms of biological role, secreted aspartic peptidases (SAPs) are a group of ten acidic hydrolases considered as key virulence factors. These enzymes supply the fungus with nutrient amino acids as well as are able to degrade the selected host's proteins involved in the immune defense. Required for cell surface integrity and cell separation during budding. In Candida albicans (strain SC5314 / ATCC MYA-2876) (Yeast), this protein is Secreted aspartic protease 10.